Consider the following 204-residue polypeptide: Nascent polypeptide-associated complex subunit alpha (204 aa).

A compositionally biased stretch (basic and acidic residues) spans 1–19; sequence MADPRVEELPDEEVPKANV. Disordered stretches follow at residues 1–47 and 118–167; these read MADP…IHSR and QLAA…GLEA. The span at 22 to 32 shows a compositional bias: acidic residues; the sequence is AGSDSESEAGE. Positions 46 to 111 constitute an NAC-A/B domain; it reads SRNEKKARKA…AKIEDLNSQA (66 aa). Over residues 118–128 the composition is skewed to low complexity; sequence QLAAAEAAAGE. The span at 129 to 151 shows a compositional bias: basic and acidic residues; the sequence is HAGHDHDHDHGKGKAPETEAKKE. Positions 152 to 164 are enriched in acidic residues; it reads EEEDDGEEVDETG. A UBA domain is found at 165-204; sequence LEAKDIELVMAQANVSRKKAVKALRENDNDIVNSIMALSI.

Belongs to the NAC-alpha family. In terms of assembly, part of the nascent polypeptide-associated complex (NAC), consisting of egd2 and egd1. NAC associates with ribosomes via egd1.

It localises to the cytoplasm. The protein localises to the nucleus. In terms of biological role, component of the nascent polypeptide-associated complex (NAC), a dynamic component of the ribosomal exit tunnel, protecting the emerging polypeptides from interaction with other cytoplasmic proteins to ensure appropriate nascent protein targeting. The NAC complex also promotes mitochondrial protein import by enhancing productive ribosome interactions with the outer mitochondrial membrane and blocks the inappropriate interaction of ribosomes translating non-secretory nascent polypeptides with translocation sites in the membrane of the endoplasmic reticulum. Egd2 may also be involved in transcription regulation. In Aspergillus fumigatus (strain ATCC MYA-4609 / CBS 101355 / FGSC A1100 / Af293) (Neosartorya fumigata), this protein is Nascent polypeptide-associated complex subunit alpha (egd2).